A 338-amino-acid polypeptide reads, in one-letter code: Protein RecA (338 aa).

G66–T73 lines the ATP pocket.

Belongs to the RecA family.

Its subcellular location is the cytoplasm. In terms of biological role, can catalyze the hydrolysis of ATP in the presence of single-stranded DNA, the ATP-dependent uptake of single-stranded DNA by duplex DNA, and the ATP-dependent hybridization of homologous single-stranded DNAs. It interacts with LexA causing its activation and leading to its autocatalytic cleavage. This chain is Protein RecA, found in Geobacter sulfurreducens (strain ATCC 51573 / DSM 12127 / PCA).